Reading from the N-terminus, the 117-residue chain is Large ribosomal subunit protein bL20 (117 aa).

The protein belongs to the bacterial ribosomal protein bL20 family.

Functionally, binds directly to 23S ribosomal RNA and is necessary for the in vitro assembly process of the 50S ribosomal subunit. It is not involved in the protein synthesizing functions of that subunit. The chain is Large ribosomal subunit protein bL20 from Citrifermentans bemidjiense (strain ATCC BAA-1014 / DSM 16622 / JCM 12645 / Bem) (Geobacter bemidjiensis).